The chain runs to 263 residues: Small ribosomal subunit protein eS4 (263 aa).

One can recognise an S4 RNA-binding domain in the interval 42-104 (LPLIIFLRNR…TGEHFRLVYD (63 aa)).

This sequence belongs to the eukaryotic ribosomal protein eS4 family.

The protein is Small ribosomal subunit protein eS4 (RPS4) of Gallus gallus (Chicken).